The following is a 1295-amino-acid chain: Phosphoribosylformylglycinamidine synthase (1295 aa).

A disordered region spans residues 305–327; that stretch reads WPGAATGSGGEIRDEGATGRGAK. Residues 307-318 and A678 contribute to the ATP site; that span reads GAATGSGGEIRD. Residues E718, N722, and D884 each coordinate Mg(2+). S886 serves as a coordination point for ATP. Positions 1042–1295 constitute a Glutamine amidotransferase type-1 domain; the sequence is VAVLREQGVN…IFRNARKQLG (254 aa). Catalysis depends on C1135, which acts as the Nucleophile. Active-site residues include H1260 and E1262.

In the N-terminal section; belongs to the FGAMS family. As to quaternary structure, monomer.

It is found in the cytoplasm. The enzyme catalyses N(2)-formyl-N(1)-(5-phospho-beta-D-ribosyl)glycinamide + L-glutamine + ATP + H2O = 2-formamido-N(1)-(5-O-phospho-beta-D-ribosyl)acetamidine + L-glutamate + ADP + phosphate + H(+). It participates in purine metabolism; IMP biosynthesis via de novo pathway; 5-amino-1-(5-phospho-D-ribosyl)imidazole from N(2)-formyl-N(1)-(5-phospho-D-ribosyl)glycinamide: step 1/2. Functionally, phosphoribosylformylglycinamidine synthase involved in the purines biosynthetic pathway. Catalyzes the ATP-dependent conversion of formylglycinamide ribonucleotide (FGAR) and glutamine to yield formylglycinamidine ribonucleotide (FGAM) and glutamate. The sequence is that of Phosphoribosylformylglycinamidine synthase from Shigella boydii serotype 4 (strain Sb227).